The primary structure comprises 619 residues: DEAD-box ATP-dependent RNA helicase 14 (619 aa).

An N-acetylalanine modification is found at Ala2. One can recognise a WW domain in the interval 17-51; that stretch reads HTLPKPWKGLIDDRTGYLYFWNPETNVTQYEKPTP. The disordered stretch occupies residues 47–139; sequence EKPTPSLPPK…APASELSPEA (93 aa). The span at 61 to 71 shows a compositional bias: low complexity; that stretch reads VSVSSSVQVQQ. The span at 78 to 93 shows a compositional bias: basic and acidic residues; that stretch reads PKDDDKYSRGSERVSR. Residues 125 to 139 are compositionally biased toward low complexity; that stretch reads PLPSSAPASELSPEA. Ser136 carries the phosphoserine modification. The short motif at 158–186 is the Q motif element; that stretch reads MSFEATGFPPELLREVLSAGFSAPTPIQA. In terms of domain architecture, Helicase ATP-binding spans 189 to 363; sequence WPIAMQGRDI…ADLLVNPAQV (175 aa). 202–209 is an ATP binding site; that stretch reads AKTGSGKT. Positions 311–314 match the DEAD box motif; that stretch reads DEAD. The 145-residue stretch at 392–536 folds into the Helicase C-terminal domain; the sequence is RLEQILRSQE…RVPPQIREMA (145 aa). Residues 528–619 form a disordered region; it reads VPPQIREMAT…FHETMMMKHR (92 aa). The segment covering 552 to 568 has biased composition (gly residues); the sequence is PSGGRGRGGDSGYGGRG. 2 stretches are compositionally biased toward basic and acidic residues: residues 582-595 and 609-619; these read GRER…ERFN and SFHETMMMKHR.

Belongs to the DEAD box helicase family. DDX5/DBP2 subfamily. Ubiquitous. Preferentially expressed in flowers and roots.

It localises to the nucleus. The enzyme catalyses ATP + H2O = ADP + phosphate + H(+). In terms of biological role, ATP-dependent RNA helicase involved nonsense-mediated mRNA decay and ribosome biogenesis through rRNA processing. The chain is DEAD-box ATP-dependent RNA helicase 14 (RH14) from Arabidopsis thaliana (Mouse-ear cress).